The following is a 228-amino-acid chain: UPF0173 metal-dependent hydrolase lmo1577 (228 aa).

The protein belongs to the UPF0173 family.

The polypeptide is UPF0173 metal-dependent hydrolase lmo1577 (Listeria monocytogenes serovar 1/2a (strain ATCC BAA-679 / EGD-e)).